A 121-amino-acid polypeptide reads, in one-letter code: Small ribosomal subunit protein uS13 (121 aa).

Residues 88–121 are disordered; the sequence is GMRHRRGLPVRGQHTKNNARTRKGKAVAIANKKK.

This sequence belongs to the universal ribosomal protein uS13 family. In terms of assembly, part of the 30S ribosomal subunit. Forms a loose heterodimer with protein S19. Forms two bridges to the 50S subunit in the 70S ribosome.

In terms of biological role, located at the top of the head of the 30S subunit, it contacts several helices of the 16S rRNA. In the 70S ribosome it contacts the 23S rRNA (bridge B1a) and protein L5 of the 50S subunit (bridge B1b), connecting the 2 subunits; these bridges are implicated in subunit movement. Contacts the tRNAs in the A and P-sites. The polypeptide is Small ribosomal subunit protein uS13 (Limosilactobacillus reuteri subsp. reuteri (strain JCM 1112) (Lactobacillus reuteri)).